Here is a 243-residue protein sequence, read N- to C-terminus: Complement C1q tumor necrosis factor-related protein 5 (243 aa).

Residues 1-15 (MRPLLALLLLGLASG) form the signal peptide. The tract at residues 15-124 (GSPPLDDNKI…VPPPADTPLP (110 aa)) is disordered. The Collagen-like domain occupies 30–95 (GQPGLPGTPG…AGPVGAIGPA (66 aa)). The region spanning 99–238 (SVPPRSAFSA…GFLVYSDWHS (140 aa)) is the C1q domain.

Homotrimer (via collagen-like domain). May form higher order oligomers by supercoiling of the trimers. May interact with ERFE.

It is found in the secreted. The protein is Complement C1q tumor necrosis factor-related protein 5 (C1qtnf5) of Rattus norvegicus (Rat).